The following is a 511-amino-acid chain: Movement protein (511 aa).

Its subcellular location is the host cell junction. The protein localises to the host plasmodesma. It localises to the host cytoplasm. Transports viral genome to neighboring plant cells directly through plasmosdesmata, without any budding. The movement protein allows efficient cell to cell propagation, by bypassing the host cell wall barrier. This Rice gall dwarf virus (RGDV) protein is Movement protein.